Consider the following 487-residue polypeptide: UDP-N-acetylmuramoyl-L-alanyl-D-glutamate--2,6-diaminopimelate ligase (487 aa).

Ser30 provides a ligand contact to UDP-N-acetyl-alpha-D-muramoyl-L-alanyl-D-glutamate. 109–115 (GTNGKTS) serves as a coordination point for ATP. UDP-N-acetyl-alpha-D-muramoyl-L-alanyl-D-glutamate is bound by residues 151 to 152 (TT), Ser178, and Arg186. N6-carboxylysine is present on Lys218. Meso-2,6-diaminopimelate-binding positions include Arg379, 403 to 406 (DNPR), Gly455, and Glu459. The Meso-diaminopimelate recognition motif motif lies at 403–406 (DNPR).

This sequence belongs to the MurCDEF family. MurE subfamily. Mg(2+) serves as cofactor. Carboxylation is probably crucial for Mg(2+) binding and, consequently, for the gamma-phosphate positioning of ATP.

The protein localises to the cytoplasm. The enzyme catalyses UDP-N-acetyl-alpha-D-muramoyl-L-alanyl-D-glutamate + meso-2,6-diaminopimelate + ATP = UDP-N-acetyl-alpha-D-muramoyl-L-alanyl-gamma-D-glutamyl-meso-2,6-diaminopimelate + ADP + phosphate + H(+). It functions in the pathway cell wall biogenesis; peptidoglycan biosynthesis. Its function is as follows. Catalyzes the addition of meso-diaminopimelic acid to the nucleotide precursor UDP-N-acetylmuramoyl-L-alanyl-D-glutamate (UMAG) in the biosynthesis of bacterial cell-wall peptidoglycan. In Alkaliphilus oremlandii (strain OhILAs) (Clostridium oremlandii (strain OhILAs)), this protein is UDP-N-acetylmuramoyl-L-alanyl-D-glutamate--2,6-diaminopimelate ligase.